A 313-amino-acid polypeptide reads, in one-letter code: Homoserine O-succinyltransferase (313 aa).

Cys-142 functions as the Acyl-thioester intermediate in the catalytic mechanism. Substrate-binding residues include Lys-163 and Ser-192. The active-site Proton acceptor is His-235. Glu-237 is an active-site residue. A substrate-binding site is contributed by Arg-249.

It belongs to the MetA family.

Its subcellular location is the cytoplasm. It catalyses the reaction L-homoserine + succinyl-CoA = O-succinyl-L-homoserine + CoA. It functions in the pathway amino-acid biosynthesis; L-methionine biosynthesis via de novo pathway; O-succinyl-L-homoserine from L-homoserine: step 1/1. Functionally, transfers a succinyl group from succinyl-CoA to L-homoserine, forming succinyl-L-homoserine. This chain is Homoserine O-succinyltransferase, found in Vibrio vulnificus (strain CMCP6).